A 251-amino-acid chain; its full sequence is NLP effector protein Pc129485 (251 aa).

The N-terminal stretch at 1–19 is a signal peptide; sequence MNFRIVLLVLVASLAGAQA. Positions 127–133 match the Hepta-peptide GHRHDWE motif motif; it reads GHRHNWE. Residues Asn146 and Asn218 are each glycosylated (N-linked (GlcNAc...) asparagine).

Belongs to the Necrosis inducing protein (NPP1) family.

Its subcellular location is the secreted. Secreted effector that contributes strongly to virulence during infection by P.capsici. In Phytophthora capsici, this protein is NLP effector protein Pc129485.